The following is a 510-amino-acid chain: Catalase (510 aa).

The first 26 residues, 1-26 (MPLLNWSRHMVCLTAAGLITVPTVYA), serve as a signal peptide directing secretion. Catalysis depends on residues His-78 and Asn-150. Tyr-358 provides a ligand contact to heme. Positions 386–400 (NQDGALNTGHTTSGV) are enriched in polar residues. A disordered region spans residues 386-412 (NQDGALNTGHTTSGVNYEPSRLEPRPA).

The protein belongs to the catalase family. The cofactor is heme.

The protein resides in the periplasm. It carries out the reaction 2 H2O2 = O2 + 2 H2O. Its function is as follows. Decomposes hydrogen peroxide into water and oxygen; serves to protect cells from the toxic effects of hydrogen peroxide. The polypeptide is Catalase (katB) (Pseudomonas syringae pv. syringae).